We begin with the raw amino-acid sequence, 464 residues long: 3-isopropylmalate dehydratase large subunit (464 aa).

[4Fe-4S] cluster-binding residues include Cys337, Cys397, and Cys400.

The protein belongs to the aconitase/IPM isomerase family. LeuC type 1 subfamily. Heterodimer of LeuC and LeuD. Requires [4Fe-4S] cluster as cofactor.

The catalysed reaction is (2R,3S)-3-isopropylmalate = (2S)-2-isopropylmalate. Its pathway is amino-acid biosynthesis; L-leucine biosynthesis; L-leucine from 3-methyl-2-oxobutanoate: step 2/4. Functionally, catalyzes the isomerization between 2-isopropylmalate and 3-isopropylmalate, via the formation of 2-isopropylmaleate. This Bacillus cereus (strain B4264) protein is 3-isopropylmalate dehydratase large subunit.